The primary structure comprises 213 residues: uncharacterized protein (213 aa).

This is an uncharacterized protein from Aquifex aeolicus (strain VF5).